The primary structure comprises 489 residues: Probable cytosol aminopeptidase (489 aa).

Mn(2+) contacts are provided by Lys260 and Asp265. The active site involves Lys272. Mn(2+) contacts are provided by Asp283, Asp342, and Glu344. Arg346 is an active-site residue.

It belongs to the peptidase M17 family. Mn(2+) is required as a cofactor.

The protein resides in the cytoplasm. It catalyses the reaction Release of an N-terminal amino acid, Xaa-|-Yaa-, in which Xaa is preferably Leu, but may be other amino acids including Pro although not Arg or Lys, and Yaa may be Pro. Amino acid amides and methyl esters are also readily hydrolyzed, but rates on arylamides are exceedingly low.. The enzyme catalyses Release of an N-terminal amino acid, preferentially leucine, but not glutamic or aspartic acids.. In terms of biological role, presumably involved in the processing and regular turnover of intracellular proteins. Catalyzes the removal of unsubstituted N-terminal amino acids from various peptides. In Alcanivorax borkumensis (strain ATCC 700651 / DSM 11573 / NCIMB 13689 / SK2), this protein is Probable cytosol aminopeptidase.